We begin with the raw amino-acid sequence, 399 residues long: UDP-galactopyranose mutase (399 aa).

FAD-binding residues include phenylalanine 18, glutamate 38, asparagine 46, and leucine 66. UDP-alpha-D-galactose contacts are provided by phenylalanine 157, threonine 162, tryptophan 166, and tyrosine 191. Aspartate 224–tryptophan 225 is an FAD binding site. Residues asparagine 282, arginine 292, and tyrosine 328 each contribute to the UDP-alpha-D-galactose site. FAD is bound at residue arginine 360. Tyrosine 366 contacts UDP-alpha-D-galactose. Leucine 367–methionine 369 lines the FAD pocket.

The protein belongs to the UDP-galactopyranose/dTDP-fucopyranose mutase family. Homotetramer. It depends on FAD as a cofactor.

It carries out the reaction UDP-alpha-D-galactose = UDP-alpha-D-galactofuranose. Its pathway is cell wall biogenesis; cell wall polysaccharide biosynthesis. In terms of biological role, catalyzes the interconversion through a 2-keto intermediate of uridine diphosphogalactopyranose (UDP-GalP) into uridine diphosphogalactofuranose (UDP-GalF) which is a key building block for cell wall construction in Mycobacterium tuberculosis. This chain is UDP-galactopyranose mutase (glf), found in Mycobacterium tuberculosis (strain CDC 1551 / Oshkosh).